Consider the following 165-residue polypeptide: uncharacterized protein (165 aa).

This is an uncharacterized protein from Homo sapiens (Human).